The primary structure comprises 147 residues: Hemoglobin subunit beta (147 aa).

One can recognise a Globin domain in the interval H3 to H147. Heme b contacts are provided by H64 and H93.

It belongs to the globin family. In terms of assembly, heterotetramer of two alpha-D chains and two beta chains. In terms of tissue distribution, red blood cells.

Involved in oxygen transport from the lung to the various peripheral tissues. The sequence is that of Hemoglobin subunit beta (HBB) from Chelonoidis niger (Galapagos giant tortoise).